A 412-amino-acid chain; its full sequence is Multifunctional CCA protein (412 aa).

ATP-binding residues include glycine 8 and arginine 11. Glycine 8 and arginine 11 together coordinate CTP. Residues aspartate 21 and aspartate 23 each coordinate Mg(2+). Arginine 91, arginine 137, and arginine 140 together coordinate ATP. Residues arginine 91, arginine 137, and arginine 140 each contribute to the CTP site. An HD domain is found at 228–329; that stretch reads TGIHTLMTLS…VKLFDSIDAW (102 aa).

Belongs to the tRNA nucleotidyltransferase/poly(A) polymerase family. Bacterial CCA-adding enzyme type 1 subfamily. In terms of assembly, monomer. Can also form homodimers and oligomers. Requires Mg(2+) as cofactor. Ni(2+) serves as cofactor.

It carries out the reaction a tRNA precursor + 2 CTP + ATP = a tRNA with a 3' CCA end + 3 diphosphate. The catalysed reaction is a tRNA with a 3' CCA end + 2 CTP + ATP = a tRNA with a 3' CCACCA end + 3 diphosphate. In terms of biological role, catalyzes the addition and repair of the essential 3'-terminal CCA sequence in tRNAs without using a nucleic acid template. Adds these three nucleotides in the order of C, C, and A to the tRNA nucleotide-73, using CTP and ATP as substrates and producing inorganic pyrophosphate. tRNA 3'-terminal CCA addition is required both for tRNA processing and repair. Also involved in tRNA surveillance by mediating tandem CCA addition to generate a CCACCA at the 3' terminus of unstable tRNAs. While stable tRNAs receive only 3'-terminal CCA, unstable tRNAs are marked with CCACCA and rapidly degraded. This Escherichia coli O1:K1 / APEC protein is Multifunctional CCA protein.